The sequence spans 387 residues: GTPase Obg (387 aa).

The region spanning 1–159 (MKFVDEAIIR…RSLKLELLLL (159 aa)) is the Obg domain. The OBG-type G domain maps to 160–333 (ADVGLLGMPN…LAVKLLDFIA (174 aa)). Residues 166–173 (GMPNAGKS), 191–195 (FTTLV), 213–216 (DIPG), 283–286 (NKAD), and 314–316 (SAY) each bind GTP. Residues S173 and T193 each coordinate Mg(2+).

It belongs to the TRAFAC class OBG-HflX-like GTPase superfamily. OBG GTPase family. Monomer. The cofactor is Mg(2+).

It localises to the cytoplasm. Its function is as follows. An essential GTPase which binds GTP, GDP and possibly (p)ppGpp with moderate affinity, with high nucleotide exchange rates and a fairly low GTP hydrolysis rate. Plays a role in control of the cell cycle, stress response, ribosome biogenesis and in those bacteria that undergo differentiation, in morphogenesis control. The polypeptide is GTPase Obg (Shewanella halifaxensis (strain HAW-EB4)).